The primary structure comprises 459 residues: Bifunctional protein GlmU (459 aa).

Residues 1 to 228 (MNFKAIILAA…IEELMGVNSR (228 aa)) are pyrophosphorylase. UDP-N-acetyl-alpha-D-glucosamine is bound by residues 8–11 (LAAG), Lys22, Gln72, and 77–78 (GT). Asp101 lines the Mg(2+) pocket. 4 residues coordinate UDP-N-acetyl-alpha-D-glucosamine: Gly138, Glu153, Asn168, and Asn226. Asn226 is a Mg(2+) binding site. The linker stretch occupies residues 229–249 (VELSKAEEIMRRRINESHMVN). Positions 250-459 (GVTIIDTNST…KKNQKDDQSK (210 aa)) are N-acetyltransferase. UDP-N-acetyl-alpha-D-glucosamine contacts are provided by Arg331 and Lys349. His361 (proton acceptor) is an active-site residue. UDP-N-acetyl-alpha-D-glucosamine contacts are provided by Tyr364 and Asn375. Acetyl-CoA is bound by residues 384–385 (NY), Ser403, Thr421, and Arg438.

This sequence in the N-terminal section; belongs to the N-acetylglucosamine-1-phosphate uridyltransferase family. It in the C-terminal section; belongs to the transferase hexapeptide repeat family. As to quaternary structure, homotrimer. Mg(2+) serves as cofactor.

It is found in the cytoplasm. The catalysed reaction is alpha-D-glucosamine 1-phosphate + acetyl-CoA = N-acetyl-alpha-D-glucosamine 1-phosphate + CoA + H(+). It catalyses the reaction N-acetyl-alpha-D-glucosamine 1-phosphate + UTP + H(+) = UDP-N-acetyl-alpha-D-glucosamine + diphosphate. It participates in nucleotide-sugar biosynthesis; UDP-N-acetyl-alpha-D-glucosamine biosynthesis; N-acetyl-alpha-D-glucosamine 1-phosphate from alpha-D-glucosamine 6-phosphate (route II): step 2/2. The protein operates within nucleotide-sugar biosynthesis; UDP-N-acetyl-alpha-D-glucosamine biosynthesis; UDP-N-acetyl-alpha-D-glucosamine from N-acetyl-alpha-D-glucosamine 1-phosphate: step 1/1. It functions in the pathway bacterial outer membrane biogenesis; LPS lipid A biosynthesis. In terms of biological role, catalyzes the last two sequential reactions in the de novo biosynthetic pathway for UDP-N-acetylglucosamine (UDP-GlcNAc). The C-terminal domain catalyzes the transfer of acetyl group from acetyl coenzyme A to glucosamine-1-phosphate (GlcN-1-P) to produce N-acetylglucosamine-1-phosphate (GlcNAc-1-P), which is converted into UDP-GlcNAc by the transfer of uridine 5-monophosphate (from uridine 5-triphosphate), a reaction catalyzed by the N-terminal domain. This is Bifunctional protein GlmU from Clostridioides difficile (strain 630) (Peptoclostridium difficile).